Reading from the N-terminus, the 148-residue chain is MKALIILGLVLLSVMVQAKVFERCELARTLKRLGMDGYRGISLANWMCLAKWESGYNTRATNYNPGDRSTDYGIFQINSRYWCNDGKTPGAVNACHLSCNALLQDNIADAVACAKRVVRDPQGIRAWVAWRNRCQNRDLRQYIQGCGV.

An N-terminal signal peptide occupies residues 1-18 (MKALIILGLVLLSVMVQA). A C-type lysozyme domain is found at 19 to 148 (KVFERCELAR…LRQYIQGCGV (130 aa)). Cystine bridges form between Cys-24-Cys-146, Cys-48-Cys-134, Cys-83-Cys-99, and Cys-95-Cys-113. Catalysis depends on residues Glu-53 and Asp-71.

This sequence belongs to the glycosyl hydrolase 22 family. In terms of assembly, monomer.

The protein resides in the secreted. It catalyses the reaction Hydrolysis of (1-&gt;4)-beta-linkages between N-acetylmuramic acid and N-acetyl-D-glucosamine residues in a peptidoglycan and between N-acetyl-D-glucosamine residues in chitodextrins.. In terms of biological role, lysozymes have primarily a bacteriolytic function; those in tissues and body fluids are associated with the monocyte-macrophage system and enhance the activity of immunoagents. The protein is Lysozyme C (LYZ) of Hylobates lar (Lar gibbon).